We begin with the raw amino-acid sequence, 93 residues long: EERVLTPHTPSLKTVCFGLALASLINKGCVLTFFLEWRKQIHILRRRRGLATAWQTGKSQKRQWTPLGSLWLCIAHVVLLAVECNNKQSWSSF.

This Glycine max (Soybean) protein is Early nodulin-36B.